The following is a 293-amino-acid chain: Nucleotide-binding protein BA_5384/GBAA_5384/BAS5004 (293 aa).

Residue 14–21 (GMSGAGKT) coordinates ATP. 65-68 (DLRG) is a GTP binding site.

It belongs to the RapZ-like family.

Displays ATPase and GTPase activities. This chain is Nucleotide-binding protein BA_5384/GBAA_5384/BAS5004, found in Bacillus anthracis.